The chain runs to 32 residues: Sodium channel neurotoxin BmK NT2 (32 aa).

Residues 2–32 enclose the LCN-type CS-alpha/beta domain; it reads RDAYIAKPENCVYHCAGNEGCNNLCTCNGAT.

Expressed by the venom gland.

It is found in the secreted. Functionally, alpha toxins bind voltage-independently at site-3 of sodium channels (Nav) and inhibit the inactivation of the activated channels, thereby blocking neuronal transmission. This toxin dose-dependently delays inactivation of voltage-gated sodium channels (Nav) (EC(50)=0.91 uM), and shifts the steady-state activation and inactivation to hyperpolarized direction. In addition, it dose-dependently alters calcium dynamics and increases phosphorylation of MAP kinases 1/3 (MAPK1/MAPK3) and cAMP-response element binding (CREB) proteins in neocortical neurons. This effect is eliminated by tetrodotoxin, a Nav blocker. The polypeptide is Sodium channel neurotoxin BmK NT2 (Olivierus martensii (Manchurian scorpion)).